The chain runs to 467 residues: Neurexin-1-beta (467 aa).

The N-terminal stretch at 1–45 is a signal peptide; sequence MYQRMLRCGAELGSPGGGGGGAGGRLALLWIVPLTLSGLLGVAWG. At 46 to 391 the chain is on the extracellular side; sequence ASSLGAHHIH…EVIRESSSTT (346 aa). One can recognise a Laminin G-like domain in the interval 86–284; the sequence is YIFSKGGGQI…DANIAIVGNV (199 aa). The Ca(2+) site is built by aspartate 136 and valine 153. Asparagine 183 is a glycosylation site (N-linked (GlcNAc...) asparagine). The tract at residues 200–229 is essential for interaction with CBLN1; modulates interaction affinity with NLGN1, NLGN2 and NLGN3; prevents interaction with DAG1/alpha-dystroglycan; modulates interaction with alpha-latrotoxin; that stretch reads GNNDNERLAIARQRIPYRLGRVVDEWLLDK. Residues isoleucine 235 and asparagine 237 each coordinate Ca(2+). Residues 318 to 380 form a disordered region; it reads LATSTARRGN…AGGREPYPGS (63 aa). Polar residues predominate over residues 324–339; sequence RRGNSPTKEPVSQTTD. Serine 345 carries an O-linked (Xyl...) (heparan sulfate) serine glycan. A helical transmembrane segment spans residues 392–412; it reads GMVVGIVAAAALCILILLYAM. At 413-467 the chain is on the cytoplasmic side; it reads YKYRNRDEGSYHVDESRNYISNSAQSNGAVVKEKQPSSAKSANKNKKNKDKEYYV. Residues 434–467 form a disordered region; it reads NSAQSNGAVVKEKQPSSAKSANKNKKNKDKEYYV. Phosphoserine occurs at positions 449, 450, and 453.

Belongs to the neurexin family. The cytoplasmic C-terminal region binds to CASK. Binds NLGN1, NLGN2 and NLGN3, DAG1 (alpha-dystroglycan) and alpha-latrotoxin. Binding to neuroligins is calcium-dependent, and the binding preference ranks as follow: NLGN1 &gt; NLGN4 &gt;&gt; NLGN3 &gt; NLGN2. Interacts with CBLN2 and more weakly with CBLN4. Interacts with CBLN1; interaction is CBLN1 hexamer form-dependent; CBLN1-binding is calcium-independent; isoform 1b does not interact with CBLN1. Interacts with CLSTN3. In terms of processing, O-glycosylated; contains heparan sulfate. Heparan sulfate attachment is required for synapse development by mediating interactions with neuroligins.

The protein localises to the presynaptic cell membrane. In terms of biological role, neuronal cell surface protein involved in cell recognition and cell adhesion by forming intracellular junctions through binding to neuroligins. Plays a role in formation of synaptic junctions. Functions as part of a trans-synaptic complex by binding to cerebellins and postsynaptic GRID1. This interaction helps regulate the activity of NMDA and AMPA receptors at hippocampal synapses without affecting synapse formation. NRXN1B-CBLN2-GRID1 complex transduce presynaptic signals into postsynaptic NMDAR response. The polypeptide is Neurexin-1-beta (Bos taurus (Bovine)).